Here is a 122-residue protein sequence, read N- to C-terminus: Small ribosomal subunit protein uS13 (122 aa).

Residues 95–122 are disordered; sequence QLPVRGQRTHTNARTRKGKAKPIAGKKK.

Belongs to the universal ribosomal protein uS13 family. In terms of assembly, part of the 30S ribosomal subunit. Forms a loose heterodimer with protein S19. Forms two bridges to the 50S subunit in the 70S ribosome.

Functionally, located at the top of the head of the 30S subunit, it contacts several helices of the 16S rRNA. In the 70S ribosome it contacts the 23S rRNA (bridge B1a) and protein L5 of the 50S subunit (bridge B1b), connecting the 2 subunits; these bridges are implicated in subunit movement. Contacts the tRNAs in the A and P-sites. The sequence is that of Small ribosomal subunit protein uS13 from Beijerinckia indica subsp. indica (strain ATCC 9039 / DSM 1715 / NCIMB 8712).